The chain runs to 194 residues: ATP-dependent Clp protease proteolytic subunit (194 aa).

The active-site Nucleophile is the S97. The active site involves H122.

The protein belongs to the peptidase S14 family. Fourteen ClpP subunits assemble into 2 heptameric rings which stack back to back to give a disk-like structure with a central cavity, resembling the structure of eukaryotic proteasomes.

The protein resides in the cytoplasm. It catalyses the reaction Hydrolysis of proteins to small peptides in the presence of ATP and magnesium. alpha-casein is the usual test substrate. In the absence of ATP, only oligopeptides shorter than five residues are hydrolyzed (such as succinyl-Leu-Tyr-|-NHMec, and Leu-Tyr-Leu-|-Tyr-Trp, in which cleavage of the -Tyr-|-Leu- and -Tyr-|-Trp bonds also occurs).. Its function is as follows. Cleaves peptides in various proteins in a process that requires ATP hydrolysis. Has a chymotrypsin-like activity. Plays a major role in the degradation of misfolded proteins. The protein is ATP-dependent Clp protease proteolytic subunit of Carsonella ruddii (strain PV).